A 270-amino-acid polypeptide reads, in one-letter code: Pancreas transcription factor 1 subunit alpha (270 aa).

The 53-residue stretch at 119–171 folds into the bHLH domain; the sequence is QLRQAANVRERRRMQSINDAFEGLRSHIPTLPYEKRLSKVDTLRLAIGYINFL.

The protein resides in the nucleus. Functionally, transcription factor implicated in the cell fate determination in various organs. Binds to the E-box consensus sequence 5'-CANNTG-3'. Acts together with pdx1 to induce the pancreatic lineage within the endoderm. Plays a central role in directing the differentiation of retinal progenitors towards horizontal and amacrine fates. This chain is Pancreas transcription factor 1 subunit alpha (ptf1a), found in Xenopus laevis (African clawed frog).